We begin with the raw amino-acid sequence, 224 residues long: uncharacterized protein (224 aa).

The segment at 11-42 (YYCKYCQIFVKDTPFARRSHEQTYKHQDAIKK) adopts a Matrin-type zinc-finger fold. Low complexity predominate over residues 67–80 (ATATTASAVSSELA). Disordered regions lie at residues 67 to 158 (ATAT…RNRE) and 172 to 224 (VKPK…YDQS). Over residues 87 to 98 (KEHPKLRPSKKK) the composition is skewed to basic residues. Residues 108-122 (TSSTETDTISTTHTS) are compositionally biased toward low complexity. Residues 175 to 199 (KNLDKVPKLAENEGNKSLESKESNE) are compositionally biased toward basic and acidic residues. Residues 203–216 (VFKKKKSGKLRTKS) show a composition bias toward basic residues.

It localises to the nucleus. Its subcellular location is the nucleolus. This is an uncharacterized protein from Schizosaccharomyces pombe (strain 972 / ATCC 24843) (Fission yeast).